A 127-amino-acid polypeptide reads, in one-letter code: Serum amyloid A protein (127 aa).

The signal sequence occupies residues 1–18; sequence MKLLTSLFLLSLVLCVNS. Gln-19 is subject to Pyrrolidone carboxylic acid. The tract at residues 89–127 is disordered; it reads GGSSGRGVEDSMADQEANRWGRSGKDPNRYRPKGLDPKY. Basic and acidic residues predominate over residues 104 to 127; it reads EANRWGRSGKDPNRYRPKGLDPKY.

It belongs to the SAA family. Expressed by the liver; secreted in plasma.

The protein resides in the secreted. In terms of biological role, major acute phase reactant. Apolipoprotein of the HDL complex. This chain is Serum amyloid A protein (SAA1), found in Notamacropus eugenii (Tammar wallaby).